The chain runs to 424 residues: Proline--tRNA ligase (424 aa).

Belongs to the class-II aminoacyl-tRNA synthetase family. ProS type 2 subfamily. In terms of assembly, homodimer.

It is found in the cytoplasm. The enzyme catalyses tRNA(Pro) + L-proline + ATP = L-prolyl-tRNA(Pro) + AMP + diphosphate. In terms of biological role, catalyzes the attachment of proline to tRNA(Pro) in a two-step reaction: proline is first activated by ATP to form Pro-AMP and then transferred to the acceptor end of tRNA(Pro). This is Proline--tRNA ligase from Ehrlichia chaffeensis (strain ATCC CRL-10679 / Arkansas).